The chain runs to 60 residues: UPF0434 protein Spro_1718 (60 aa).

It belongs to the UPF0434 family.

The protein is UPF0434 protein Spro_1718 of Serratia proteamaculans (strain 568).